We begin with the raw amino-acid sequence, 247 residues long: Chalcone--flavanone isomerase (247 aa).

Substrate is bound by residues T56, N121, and S198. A compositionally biased stretch (basic and acidic residues) spans 223–235 (ENKVEEDATKTDQ). Residues 223–247 (ENKVEEDATKTDQEEANDLSLAKEN) are disordered.

Belongs to the chalcone isomerase family.

It carries out the reaction a chalcone = a flavanone.. It participates in secondary metabolite biosynthesis; flavonoid biosynthesis. Its function is as follows. Catalyzes the intramolecular cyclization of bicyclic chalcones into tricyclic (S)-flavanones. Responsible for the isomerization of 4,2',4',6'-tetrahydroxychalcone (also termed chalcone) into naringenin. This chain is Chalcone--flavanone isomerase (CHI), found in Raphanus sativus (Radish).